A 311-amino-acid polypeptide reads, in one-letter code: Urease accessory protein UreD 2 (311 aa).

It belongs to the UreD family. As to quaternary structure, ureD, UreF and UreG form a complex that acts as a GTP-hydrolysis-dependent molecular chaperone, activating the urease apoprotein by helping to assemble the nickel containing metallocenter of UreC. The UreE protein probably delivers the nickel.

Its subcellular location is the cytoplasm. Required for maturation of urease via the functional incorporation of the urease nickel metallocenter. The chain is Urease accessory protein UreD 2 from Methylorubrum extorquens (strain PA1) (Methylobacterium extorquens).